The chain runs to 377 residues: GTP 3',8-cyclase (377 aa).

Residues 1-29 are disordered; that stretch reads MTTRLYLSPTPPRNDREGASKSTSASIKH. The 227-residue stretch at 45–271 folds into the Radical SAM core domain; sequence RFGRIARDLR…FTLSPAKEPR (227 aa). Arg54 serves as a coordination point for GTP. Positions 61 and 65 each coordinate [4Fe-4S] cluster. Residue Tyr67 participates in S-adenosyl-L-methionine binding. Cys68 is a [4Fe-4S] cluster binding site. Arg105 provides a ligand contact to GTP. Gly109 serves as a coordination point for S-adenosyl-L-methionine. A GTP-binding site is contributed by Thr140. Ser164 lines the S-adenosyl-L-methionine pocket. Lys201 serves as a coordination point for GTP. Position 235 (Met235) interacts with S-adenosyl-L-methionine. Residues Cys304 and Cys307 each contribute to the [4Fe-4S] cluster site. 309–311 contributes to the GTP binding site; it reads RSR. A [4Fe-4S] cluster-binding site is contributed by Cys321.

It belongs to the radical SAM superfamily. MoaA family. In terms of assembly, monomer and homodimer. It depends on [4Fe-4S] cluster as a cofactor.

It catalyses the reaction GTP + AH2 + S-adenosyl-L-methionine = (8S)-3',8-cyclo-7,8-dihydroguanosine 5'-triphosphate + 5'-deoxyadenosine + L-methionine + A + H(+). The protein operates within cofactor biosynthesis; molybdopterin biosynthesis. In terms of biological role, catalyzes the cyclization of GTP to (8S)-3',8-cyclo-7,8-dihydroguanosine 5'-triphosphate. This chain is GTP 3',8-cyclase, found in Corynebacterium glutamicum (strain ATCC 13032 / DSM 20300 / JCM 1318 / BCRC 11384 / CCUG 27702 / LMG 3730 / NBRC 12168 / NCIMB 10025 / NRRL B-2784 / 534).